The following is a 1288-amino-acid chain: Vacuolating cytotoxin autotransporter (1288 aa).

Positions 1-33 (MEIQQTHRKINRPLVSLVLAGALISAIPQESHA) are cleaved as a signal peptide. The segment at 326 to 377 (PPEGGYKDKPNSTTSQSGTKNDKKEISQNNNSNTEVINPPNNTQKTETEPTQ) is disordered. Positions 352-376 (SQNNNSNTEVINPPNNTQKTETEPT) are enriched in polar residues. An Autotransporter domain is found at 1015 to 1288 (KYEKPTNVWA…ASNLGMRYSF (274 aa)).

The protein resides in the periplasm. The protein localises to the secreted. It localises to the cell surface. Its subcellular location is the cell outer membrane. Its function is as follows. Induces vacuolation of eukaryotic cells. Causes ulceration and gastric lesions. This chain is Vacuolating cytotoxin autotransporter (vacA), found in Helicobacter pylori (strain J99 / ATCC 700824) (Campylobacter pylori J99).